The following is a 71-amino-acid chain: Small integral membrane protein 31 (71 aa).

A helical membrane pass occupies residues 8–28 (LEVAFILLAFFIFSLFTLASI). Residues 48–57 (RKRKEFKGKK) are compositionally biased toward basic residues. The disordered stretch occupies residues 48-71 (RKRKEFKGKKNCSDEEHKIETMQP). Residue asparagine 58 is glycosylated (N-linked (GlcNAc...) asparagine). Positions 58–71 (NCSDEEHKIETMQP) are enriched in basic and acidic residues.

Its subcellular location is the membrane. The chain is Small integral membrane protein 31 from Mus musculus (Mouse).